A 145-amino-acid polypeptide reads, in one-letter code: Putative pre-16S rRNA nuclease (145 aa).

It belongs to the YqgF nuclease family.

The protein localises to the cytoplasm. Its function is as follows. Could be a nuclease involved in processing of the 5'-end of pre-16S rRNA. This chain is Putative pre-16S rRNA nuclease, found in Pseudomonas fluorescens (strain ATCC BAA-477 / NRRL B-23932 / Pf-5).